The following is a 335-amino-acid chain: Ficolin-1 (335 aa).

Positions 1–17 are cleaved as a signal peptide; that stretch reads MWWPMLWAFPVLLCLCS. Positions 47-114 are disordered; that stretch reads SCPSFPGPPG…TASPLGQKEL (68 aa). Positions 50 to 88 constitute a Collagen-like domain; sequence SFPGPPGPKGEPGSPAGRGERGLQGSPGKMGPPGSKGEP. Residues 75 to 88 are compositionally biased toward low complexity; it reads SPGKMGPPGSKGEP. The Fibrinogen C-terminal domain maps to 117–335; that stretch reads ALCRRGPRSC…KVAEMKIRAS (219 aa). 2 disulfides stabilise this stretch: C119-C147 and C126-C154. The a domain; contributes to trimerization stretch occupies residues 123-162; sequence PRSCKDLLTRGIFLTGWYTIYLPDCRPLTVLCDMDVDGGG. The tract at residues 163-251 is b domain; contributes to trimerization; sequence WTVFQRRVDG…LTLGQFLEGT (89 aa). D270 lines the Ca(2+) pocket. The N-linked (GlcNAc...) asparagine glycan is linked to N271. Position 272 (D272) interacts with Ca(2+). A disulfide bridge connects residues C279 and C292. 291–293 lines the a carbohydrate pocket; that stretch reads DCH. The p domain stretch occupies residues 326–335; the sequence is KVAEMKIRAS.

This sequence belongs to the ficolin lectin family. In terms of assembly, homotrimer. Interacts with elastin/ELN. Interacts (via Fibrinogen C-terminal domain) with FFAR2. Interacts with CRP; may regulate monocyte activation by FCN1.

It is found in the secreted. The protein resides in the cell membrane. Functionally, extracellular lectin functioning as a pattern-recognition receptor in innate immunity. Binds the sugar moieties of pathogen-associated molecular patterns (PAMPs) displayed on microbes and activates the lectin pathway of the complement system. May also activate monocytes through a G protein-coupled receptor, FFAR2, inducing the secretion of interleukin-8/IL-8. Binds preferentially to 9-O-acetylated 2-6-linked sialic acid derivatives and to various glycans containing sialic acid engaged in a 2-3 linkage. The protein is Ficolin-1 (Fcn1) of Rattus norvegicus (Rat).